A 182-amino-acid chain; its full sequence is GTP cyclohydrolase 1 (182 aa).

The Zn(2+) site is built by Cys73, His76, and Cys144.

The protein belongs to the GTP cyclohydrolase I family. Homomer.

It catalyses the reaction GTP + H2O = 7,8-dihydroneopterin 3'-triphosphate + formate + H(+). The protein operates within cofactor biosynthesis; 7,8-dihydroneopterin triphosphate biosynthesis; 7,8-dihydroneopterin triphosphate from GTP: step 1/1. This is GTP cyclohydrolase 1 from Hydrogenobaculum sp. (strain Y04AAS1).